The sequence spans 885 residues: DNA-directed RNA polymerase subunit Rpo1N (885 aa).

8 residues coordinate Zn(2+): C60, C63, C70, H73, C100, C103, C150, and C153. 3 residues coordinate Mg(2+): D464, D466, and D468.

This sequence belongs to the RNA polymerase beta' chain family. In terms of assembly, part of the RNA polymerase complex. The cofactor is Mg(2+). Requires Zn(2+) as cofactor.

The protein localises to the cytoplasm. It catalyses the reaction RNA(n) + a ribonucleoside 5'-triphosphate = RNA(n+1) + diphosphate. Functionally, DNA-dependent RNA polymerase (RNAP) catalyzes the transcription of DNA into RNA using the four ribonucleoside triphosphates as substrates. Forms the clamp head domain. In Thermoplasma acidophilum (strain ATCC 25905 / DSM 1728 / JCM 9062 / NBRC 15155 / AMRC-C165), this protein is DNA-directed RNA polymerase subunit Rpo1N.